Reading from the N-terminus, the 85-residue chain is Putative regulatory protein THEYE_A0405 (85 aa).

Belongs to the RemA family.

This is Putative regulatory protein THEYE_A0405 from Thermodesulfovibrio yellowstonii (strain ATCC 51303 / DSM 11347 / YP87).